The sequence spans 409 residues: Argininosuccinate synthase (409 aa).

ATP-binding positions include 12-20 and Ala-39; that span reads AYSGGLDTS. Residues Tyr-90 and Ser-95 each coordinate L-citrulline. Gly-120 is an ATP binding site. Residues Thr-122, Asn-126, and Asp-127 each contribute to the L-aspartate site. Residue Asn-126 coordinates L-citrulline. 5 residues coordinate L-citrulline: Arg-130, Ser-181, Ser-190, Glu-266, and Tyr-278.

Belongs to the argininosuccinate synthase family. Type 1 subfamily. Homotetramer.

The protein resides in the cytoplasm. It carries out the reaction L-citrulline + L-aspartate + ATP = 2-(N(omega)-L-arginino)succinate + AMP + diphosphate + H(+). Its pathway is amino-acid biosynthesis; L-arginine biosynthesis; L-arginine from L-ornithine and carbamoyl phosphate: step 2/3. The sequence is that of Argininosuccinate synthase from Acidiphilium cryptum (strain JF-5).